The primary structure comprises 94 residues: DASH complex subunit dad2 (94 aa).

Positions 18 to 38 form a coiled coil; the sequence is KLRDSSNDMVQQIETLAAKLE. The interval 72-94 is disordered; it reads VRIPPSTSNTNASATEQGDVEEV. Over residues 76–87 the composition is skewed to polar residues; that stretch reads PSTSNTNASATE.

Belongs to the DASH complex DAD2 family. Component of the DASH complex consisting of ask1, dad1, dad2, dad3, dad4, dam1, duo1, dad5, spc19 and spc34, with a stoichiometry of one copy of each subunit per complex. Multiple DASH complexes oligomerize to form a ring that encircles spindle microtubules and organizes the rod-like NDC80 complexes of the outer kinetochore. DASH complex oligomerization strengthens microtubule attachments. On cytoplasmic microtubules, DASH complexes appear to form patches instead of rings.

Its subcellular location is the nucleus. The protein resides in the cytoplasm. It localises to the cytoskeleton. The protein localises to the spindle. It is found in the chromosome. Its subcellular location is the centromere. The protein resides in the kinetochore. Functionally, component of the DASH complex that connects microtubules with kinetochores and couples microtubule depolymerisation to chromosome movement; it is involved in retrieving kinetochores to the spindle poles before their re-orientation on the spindle in early mitosis and allows microtubule depolymerization to pull chromosomes apart and resist detachment during anaphase. Kinetochores, consisting of a centromere-associated inner segment and a microtubule-contacting outer segment, play a crucial role in chromosome segregation by mediating the physical connection between centromeric DNA and microtubules. Kinetochores also serve as an input point for the spindle assembly checkpoint, which delays anaphase until all chromosomes have bioriented on the mitotic spindle. The DASH complex mediates bipolar kinetochore-microtubule attachments and facilitates the formation of additional interactions between outer kinetochore components and spindle microtubules. During chromosome movement along the microtubule, it is required both for the sliding of kinetochores along the lateral side of the microtubule and also for microtubule end-on pulling on the kinetochore. Modulates cytoplasmic microtubule dynamics by tracking the plus-end of shortening microtubules and slowing their depolymerization. The polypeptide is DASH complex subunit dad2 (Schizosaccharomyces pombe (strain 972 / ATCC 24843) (Fission yeast)).